Here is a 519-residue protein sequence, read N- to C-terminus: Amphoterin-induced protein 2 (519 aa).

Positions 1-38 are cleaved as a signal peptide; that stretch reads MSLRFHTLPTLPRAVKPGCRELLCLLVIAVMVSPSASG. The 29-residue stretch at 39–67 folds into the LRRNT domain; sequence MCPTACICATDIVSCTNKNLSKVPGNLFR. Over 39–397 the chain is Extracellular; the sequence is MCPTACICAT…RSHAHEAFNT (359 aa). 2 disulfides stabilise this stretch: Cys40–Cys46 and Cys44–Cys53. The N-linked (GlcNAc...) asparagine glycan is linked to Asn57. LRR repeat units follow at residues 68–89, 93–114, 117–138, 141–162, 165–186, and 192–213; these read LIKR…WIPV, KLST…SFST, NLKC…TFQE, ALEV…AFGG, HLQK…LYTG, and DLTF…HINL. N-linked (GlcNAc...) asparagine glycosylation occurs at Asn103. In terms of domain architecture, LRRCT spans 227 to 283; that stretch reads NPFVCDCSLYSLLIFWYRRHFSSVMDFKNDYTCRLWSDSRHSHQLQLLQESFLNCSY. Cystine bridges form between Cys231–Cys259 and Cys233–Cys281. Asn280, Asn287, Asn344, Asn372, Asn380, Asn383, and Asn387 each carry an N-linked (GlcNAc...) asparagine glycan. The Ig-like C2-type domain occupies 288-378; the sequence is GSFHALGFIH…RLLNETVDIM (91 aa). A disulfide bond links Cys309 and Cys362. The chain crosses the membrane as a helical span at residues 398–418; the sequence is AFTTLAACVASIVLVLLYLYL. Residues 419 to 519 lie on the Cytoplasmic side of the membrane; sequence TPCPCKCKAK…FSDTPFVAST (101 aa). Residues 498–519 form a disordered region; it reads RAKSDSDSVNSVFSDTPFVAST.

The protein belongs to the immunoglobulin superfamily. AMIGO family. As to quaternary structure, binds itself as well as AMIGO1 and AMIGO3. In terms of tissue distribution, highest level in cerebellum, retina, liver, and lung. Lower levels in cerebrum, kidney, small intestine, spleen and testis.

The protein resides in the cell membrane. The protein localises to the nucleus. In terms of biological role, required for depolarization-dependent survival of cultured cerebellar granule neurons. May mediate homophilic as well as heterophilic cell-cell interaction with AMIGO1 or AMIGO3. May contribute to signal transduction through its intracellular domain. This chain is Amphoterin-induced protein 2, found in Mus musculus (Mouse).